Consider the following 53-residue polypeptide: MPITDPVKLQIVYNRVLNKKVCRKCGALNPPTATKCRRCKSKNLRPKKGFKLK.

Belongs to the eukaryotic ribosomal protein eL40 family.

This chain is Large ribosomal subunit protein eL40, found in Staphylothermus marinus (strain ATCC 43588 / DSM 3639 / JCM 9404 / F1).